An 884-amino-acid polypeptide reads, in one-letter code: Microsomal triglyceride transfer protein large subunit (884 aa).

Residues M1–G21 form the signal peptide. The 635-residue stretch at L26–L660 folds into the Vitellogenin domain. C172 and C192 form a disulfide bridge. A glycan (N-linked (GlcNAc...) asparagine) is linked at N348. C438 and C443 are oxidised to a cystine. An N-linked (GlcNAc...) asparagine glycan is attached at N787.

In terms of assembly, heterodimer; heterodimerizes with the protein disulfide isomerase. As to expression, highest expression in the proximal part of the anterior intestine. Lower expression in the distal part of the anterior intestine, in the posterior portion of the intestinal tube and liver. Very low expression levels in heart, brain, ovary, testis and kidney.

It localises to the endoplasmic reticulum. The protein resides in the golgi apparatus. The enzyme catalyses a 1,2-diacyl-sn-glycero-3-phosphocholine(in) = a 1,2-diacyl-sn-glycero-3-phosphocholine(out). The catalysed reaction is a 1,2-diacyl-sn-glycero-3-phosphoethanolamine(in) = a 1,2-diacyl-sn-glycero-3-phosphoethanolamine(out). It catalyses the reaction a cholesterol ester(in) = a cholesterol ester(out). It carries out the reaction a triacyl-sn-glycerol(in) = a triacyl-sn-glycerol(out). Its activity is regulated as follows. Inhibited by naringenin. Catalyzes the transport of triglyceride between phospholipid surfaces. Catalyzes the transport of cholesteryl ester, and phospholipid between phospholipid surfaces. Required for the assembly and secretion of plasma lipoproteins that contain apolipoprotein B. Required for yolk lipid utilization and absorption of dietary lipids in larvae. In Danio rerio (Zebrafish), this protein is Microsomal triglyceride transfer protein large subunit.